Here is a 574-residue protein sequence, read N- to C-terminus: Sulfate adenylyltransferase (574 aa).

Residues 1–169 (MANTPHGGVL…IEAVNKLNHY (169 aa)) form an N-terminal region. The tract at residues 170–394 (DYVALRYTPA…LRESNPPRAS (225 aa)) is catalytic. Q197 contacts sulfate. Residues 197-200 (QTRN) and 291-294 (GRDH) contribute to the ATP site. Residues T198, R199, and N200 contribute to the active site. Position 199 (R199) interacts with sulfate. A295 serves as a coordination point for sulfate. V333 serves as a coordination point for ATP. An allosteric regulation domain; adenylyl-sulfate kinase-like region spans residues 395–574 (QGFTIFLTGY…LESEGYFERL (180 aa)). Residues 434–437 (DTVR), R451, 477–478 (IA), and R516 contribute to the 3'-phosphoadenylyl sulfate site.

It in the N-terminal section; belongs to the sulfate adenylyltransferase family. This sequence in the C-terminal section; belongs to the APS kinase family. As to quaternary structure, homohexamer. Dimer of trimers.

The protein resides in the cytoplasm. The enzyme catalyses sulfate + ATP + H(+) = adenosine 5'-phosphosulfate + diphosphate. It participates in sulfur metabolism; hydrogen sulfide biosynthesis; sulfite from sulfate: step 1/3. With respect to regulation, allosterically inhibited by 3'-phosphoadenosine 5'-phosphosulfate (PAPS). Its function is as follows. Catalyzes the first intracellular reaction of sulfate assimilation, forming adenosine-5'-phosphosulfate (APS) from inorganic sulfate and ATP. Plays an important role in sulfate activation as a component of the biosynthesis pathway of sulfur-containing amino acids. In Aspergillus niger, this protein is Sulfate adenylyltransferase.